Here is a 244-residue protein sequence, read N- to C-terminus: Carboxy-S-adenosyl-L-methionine synthase (244 aa).

S-adenosyl-L-methionine is bound by residues tyrosine 41, 66–68 (GCS), 91–92 (DN), 119–120 (DI), asparagine 134, and arginine 201.

Belongs to the class I-like SAM-binding methyltransferase superfamily. Cx-SAM synthase family. Homodimer.

The enzyme catalyses prephenate + S-adenosyl-L-methionine = carboxy-S-adenosyl-L-methionine + 3-phenylpyruvate + H2O. Its function is as follows. Catalyzes the conversion of S-adenosyl-L-methionine (SAM) to carboxy-S-adenosyl-L-methionine (Cx-SAM). This chain is Carboxy-S-adenosyl-L-methionine synthase, found in Photobacterium profundum (strain SS9).